Reading from the N-terminus, the 323-residue chain is rRNA 2'-O-methyltransferase fibrillarin (323 aa).

Residues 1–78 (MRPGFSPRGG…GGGRGGFGGG (78 aa)) form a disordered region. Gly residues-rich tracts occupy residues 7-44 (PRGGRGGFGDRGGFGGRGGFGDRGGFRGGSRGGFGGRG) and 63-78 (GRGGPRGGGRGGFGGG). Asymmetric dimethylarginine occurs at positions 8, 17, 23, and 29. S-adenosyl-L-methionine-binding positions include 174–175 (TT), 193–194 (EF), 218–219 (DA), and 238–241 (DVAQ). Residues 276–308 (APEAVFAAEVKKMQQENMKPQEQLTLEPYERDH) are helical.

It belongs to the methyltransferase superfamily. Fibrillarin family. As to quaternary structure, component of box C/D small nucleolar ribonucleoprotein (snoRNP) particles. Part of the small subunit (SSU) processome, composed of more than 70 proteins and the RNA chaperone small nucleolar RNA (snoRNA) U3. Post-translationally, by homology to other fibrillarins, some or all of the N-terminal domain arginines are modified to asymmetric dimethylarginine (DMA).

The protein localises to the nucleus. The protein resides in the nucleolus. It localises to the nucleoplasm. The catalysed reaction is L-glutaminyl-[histone H2A] + S-adenosyl-L-methionine = N(5)-methyl-L-glutaminyl-[histone H2A] + S-adenosyl-L-homocysteine + H(+). It carries out the reaction a ribonucleotide in rRNA + S-adenosyl-L-methionine = a 2'-O-methylribonucleotide in rRNA + S-adenosyl-L-homocysteine + H(+). The enzyme catalyses a ribonucleotide in U6 snRNA + S-adenosyl-L-methionine = a 2'-O-methylribonucleotide in U6 snRNA + S-adenosyl-L-homocysteine + H(+). Its function is as follows. S-adenosyl-L-methionine-dependent methyltransferase that has the ability to methylate both RNAs and proteins. Involved in pre-rRNA processing by catalyzing the site-specific 2'-hydroxyl methylation of ribose moieties in pre-ribosomal RNA. Probably catalyzes 2'-O-methylation of U6 snRNAs in box C/D RNP complexes. U6 snRNA 2'-O-methylation is required for mRNA splicing fidelity. Also acts as a protein methyltransferase by mediating methylation of 'Gln-105' of histone H2A (H2AQ104me), a modification that impairs binding of the FACT complex and is specifically present at 35S ribosomal DNA locus. Part of the small subunit (SSU) processome, first precursor of the small eukaryotic ribosomal subunit. During the assembly of the SSU processome in the nucleolus, many ribosome biogenesis factors, an RNA chaperone and ribosomal proteins associate with the nascent pre-rRNA and work in concert to generate RNA folding, modifications, rearrangements and cleavage as well as targeted degradation of pre-ribosomal RNA by the RNA exosome. The polypeptide is rRNA 2'-O-methyltransferase fibrillarin (fbl) (Xenopus laevis (African clawed frog)).